A 598-amino-acid chain; its full sequence is Nuclear receptor subfamily 4 group A member 2 (598 aa).

Residues 1–22 form a disordered region; sequence MPCVQAQYGSSPQGASPASQGY. Residues 7–18 show a composition bias toward polar residues; it reads QYGSSPQGASPA. Residues 260 to 335 constitute a DNA-binding region (nuclear receptor); it reads EGLCAVCGDN…VGMVKEVVRT (76 aa). 2 NR C4-type zinc fingers span residues 263–283 and 299–318; these read CAVC…CEGC and CLAN…CQYC. The Bipartite nuclear localization signal (NLS1) motif lies at 287–314; the sequence is FKRTVQKNAKYVCLANKNCPVDKRRRNR. Residues 337–361 are disordered; the sequence is SLKGRRGRLPSKPKSPQEPSPPSPP. Positions 338-350 match the Nuclear localization signal (NLS1) motif; the sequence is LKGRRGRLPSKPK. Positions 352–361 are enriched in pro residues; that stretch reads PQEPSPPSPP. The NR LBD domain maps to 360 to 595; that stretch reads PPVSLISALV…AIIDKLFLDT (236 aa). The nuclear export sequence (NES1) motif lies at 443–452; it reads FLELFVLRLA. Residues 568–577 carry the nuclear export sequence (NES2) motif; the sequence is QGLQRIFYLK.

It belongs to the nuclear hormone receptor family. As to quaternary structure, interacts with SFPQ, NCOR2, SIN3A and HADC1. The interaction with NCOR2 increases in the absence of PITX3. Interacts with PER2.

It is found in the cytoplasm. It localises to the nucleus. Functionally, transcriptional regulator which is important for the differentiation and maintenance of meso-diencephalic dopaminergic (mdDA) neurons during development. It is crucial for expression of a set of genes such as SLC6A3, SLC18A2, TH and DRD2 which are essential for development of mdDA neurons. In Pongo abelii (Sumatran orangutan), this protein is Nuclear receptor subfamily 4 group A member 2 (NR4A2).